The sequence spans 85 residues: Small ribosomal subunit protein uS17 (85 aa).

This sequence belongs to the universal ribosomal protein uS17 family. Part of the 30S ribosomal subunit.

In terms of biological role, one of the primary rRNA binding proteins, it binds specifically to the 5'-end of 16S ribosomal RNA. In Desulforapulum autotrophicum (strain ATCC 43914 / DSM 3382 / VKM B-1955 / HRM2) (Desulfobacterium autotrophicum), this protein is Small ribosomal subunit protein uS17.